The following is a 372-amino-acid chain: Aminomethyltransferase (372 aa).

Belongs to the GcvT family. In terms of assembly, the glycine cleavage system is composed of four proteins: P, T, L and H.

It carries out the reaction N(6)-[(R)-S(8)-aminomethyldihydrolipoyl]-L-lysyl-[protein] + (6S)-5,6,7,8-tetrahydrofolate = N(6)-[(R)-dihydrolipoyl]-L-lysyl-[protein] + (6R)-5,10-methylene-5,6,7,8-tetrahydrofolate + NH4(+). In terms of biological role, the glycine cleavage system catalyzes the degradation of glycine. The polypeptide is Aminomethyltransferase (Burkholderia cenocepacia (strain ATCC BAA-245 / DSM 16553 / LMG 16656 / NCTC 13227 / J2315 / CF5610) (Burkholderia cepacia (strain J2315))).